Consider the following 115-residue polypeptide: UPF0597 protein NTHI1023 (115 aa).

This sequence belongs to the UPF0597 family.

In Haemophilus influenzae (strain 86-028NP), this protein is UPF0597 protein NTHI1023.